Here is an 841-residue protein sequence, read N- to C-terminus: Rhomboid-like protease 5 (841 aa).

Low complexity predominate over residues 1-10 (MSSKGGSSRL). The tract at residues 1–289 (MSSKGGSSRL…GGDGGPRRHS (289 aa)) is disordered. Basic and acidic residues predominate over residues 11–51 (GSKDLKKMTSRTERELRDSGRVRGEVERVEKRLRATAKVKE). The segment covering 95–132 (LRPASSSPRLASSSRPTESTLPSSSSRALQGASSSSSS) has biased composition (low complexity). Composition is skewed to basic and acidic residues over residues 154–163 (LRQEKKRLPE), 209–230 (RTAE…RGSV), and 243–275 (SSHE…RSGD). 6 helical membrane-spanning segments follow: residues 323-343 (FLMI…ELVL), 464-484 (MFRV…LLNV), 492-512 (WILE…VGGV), 526-546 (VTVG…PFSI), 571-590 (FGNM…GGLI), and 673-693 (FAAA…LLVP). Ser-531 functions as the Nucleophile in the catalytic mechanism. The active site involves His-585.

It belongs to the peptidase S54 family.

Its subcellular location is the membrane. It carries out the reaction Cleaves type-1 transmembrane domains using a catalytic dyad composed of serine and histidine that are contributed by different transmembrane domains.. Functionally, serine protease involved in intramembrane proteolysis. Cleaves microneme adhesins, such as MIC2. This step is essential for efficient invasion of host cells. Catalyzes intramembrane proteolysis of AMA1. This is Rhomboid-like protease 5 (ROM5) from Toxoplasma gondii.